The sequence spans 264 residues: Transmembrane protein 41A (264 aa).

An N-terminal signal peptide occupies residues 1–17; the sequence is MHSLLGLLLVFAGSTFA. The next 5 helical transmembrane spans lie at 67–87, 90–110, 153–173, 175–195, and 219–239; these read VYVFLLFCSAYLYKQSFAIPG, FLNVLAGALFGPWLGLLLCCV, LFFFLLFLRLFPMTPNWFLNL, APILNIPIVQFFFSVLIGLIP, and WETAFKLLAIALVALVPGTLI. The segment at 96 to 207 is VTT domain; the sequence is GALFGPWLGL…FICVQTGSIL (112 aa).

The protein belongs to the TMEM41 family.

The protein resides in the membrane. In Bos taurus (Bovine), this protein is Transmembrane protein 41A (TMEM41A).